The following is a 199-amino-acid chain: Stress response protein SCP2 (199 aa).

Belongs to the CAPAB/TerDEXZ family.

The protein resides in the cytoplasm. The chain is Stress response protein SCP2 (yceC) from Bacillus subtilis (strain 168).